Here is a 392-residue protein sequence, read N- to C-terminus: uncharacterized protein (392 aa).

An N-terminal signal peptide occupies residues 1–23 (MWTALVLVWISSVLLPRSHMMSA). Over 24-342 (EPRNIVTNKW…DALTPSLVNK (319 aa)) the chain is Extracellular. Asn-77 carries N-linked (GlcNAc...) asparagine glycosylation. Disordered regions lie at residues 83 to 154 (AEVT…PRTA) and 167 to 320 (AAGT…TDSC). Low complexity predominate over residues 86–97 (TTHGTNTSTPTT). Polar residues-rich tracts occupy residues 107 to 127 (SRTLAVPTSSGPSSAEQTRPT) and 170 to 249 (TVNT…SAST). N-linked (GlcNAc...) asparagine glycosylation occurs at Asn-172. Composition is skewed to low complexity over residues 265 to 277 (SPTTQPSPTLPTQ) and 284 to 309 (TLLTTEQVGTKTTSGTASAGPTSRSS). A helical transmembrane segment spans residues 343–363 (MLLLVVLLVGVTLFIAVLVMF). Over 364–392 (ALQAYESYKKKDYTQVDYLINGMYADSEM) the chain is Cytoplasmic.

The protein resides in the cell membrane. Its subcellular location is the golgi apparatus. It localises to the trans-Golgi network membrane. This is an uncharacterized protein from Mus musculus (Mouse).